The sequence spans 503 residues: Probable zinc metalloprotease UREG_01421 (503 aa).

The signal sequence occupies residues 1–24 (MHSLSSALAGSTFVLLFLCLLASA). Asparagine 105 carries N-linked (GlcNAc...) asparagine glycosylation. 3 residues coordinate Zn(2+): histidine 176, aspartate 196, and glutamate 232. A glycan (N-linked (GlcNAc...) asparagine) is linked at asparagine 247. Position 259 (aspartate 259) interacts with Zn(2+). Residues 416 to 503 (MPRNVRVSTR…RGVAVLPFPA (88 aa)) enclose the Fibronectin type-III domain. N-linked (GlcNAc...) asparagine glycosylation is present at asparagine 429.

This sequence belongs to the peptidase M28 family. M28B subfamily. Requires Zn(2+) as cofactor.

It localises to the secreted. In Uncinocarpus reesii (strain UAMH 1704), this protein is Probable zinc metalloprotease UREG_01421.